Consider the following 479-residue polypeptide: MTDAKRAQKLDLSLDHKVADMSLADYGRKDLQLSEREMPGLMELIRKYGGTKPLKGLKVTGSLHMTIQTAMLIRTLYELGADIRWASCNIFSTQDHAAAAIAASGMAKVFAWKGETLEDYWWCTEMALTWPDGSGPDLLVDDGGDATLFIHKGVEVENDPSLLKKAYDNKEFQIIMDRLALAYEQDPGRWQRVAAKVRGVSEETTTGVHRLYQLEQEGKLLFPAINVNDAVTKSKFDNLYGCRESLADGIKRATDVMVAGKVVVVAGYGDVGKGCAQSMRGFGARVLVTEIDPICALQAAMEGYEVTTMEEAVRTGDIFVTATGNCNVITGAHMEAMKDEAIVCNIGHFDNEIDMHYLENTEGCVCLNIKPQVDKWTLRSGRSIIVLAEGRLVNLGCATGHPSFVMSASFTNQTLAQIELATNPDLERKVYTLPKKLDEEVARLHLDRLGVKLTRLSKDQADYIGVSPEGPFKPDHYRY.

Thr66, Asp142, and Glu203 together coordinate substrate. 204 to 206 (TTT) lines the NAD(+) pocket. Positions 233 and 237 each coordinate substrate. Residues Asn238, 267 to 272 (GYGDVG), Glu290, Asn325, 346 to 348 (IGH), and Asn394 contribute to the NAD(+) site.

Belongs to the adenosylhomocysteinase family. NAD(+) is required as a cofactor.

Its subcellular location is the cytoplasm. It carries out the reaction S-adenosyl-L-homocysteine + H2O = L-homocysteine + adenosine. It functions in the pathway amino-acid biosynthesis; L-homocysteine biosynthesis; L-homocysteine from S-adenosyl-L-homocysteine: step 1/1. May play a key role in the regulation of the intracellular concentration of adenosylhomocysteine. This is Adenosylhomocysteinase from Nitratidesulfovibrio vulgaris (strain ATCC 29579 / DSM 644 / CCUG 34227 / NCIMB 8303 / VKM B-1760 / Hildenborough) (Desulfovibrio vulgaris).